Here is a 467-residue protein sequence, read N- to C-terminus: Probable protein phosphatase 2C 55 (467 aa).

One can recognise a PPM-type phosphatase domain in the interval 222-458; sequence SCYLPHPDKE…DDITVVVSYV (237 aa). Asp252, Gly253, Asp383, and Asp449 together coordinate Mn(2+).

It belongs to the PP2C family. Mg(2+) serves as cofactor. Mn(2+) is required as a cofactor.

It catalyses the reaction O-phospho-L-seryl-[protein] + H2O = L-seryl-[protein] + phosphate. It carries out the reaction O-phospho-L-threonyl-[protein] + H2O = L-threonyl-[protein] + phosphate. This chain is Probable protein phosphatase 2C 55, found in Arabidopsis thaliana (Mouse-ear cress).